Reading from the N-terminus, the 460-residue chain is Metal cation symporter ZIP8 (460 aa).

The first 22 residues, 1–22 (MAPGRAVAGLLLLAAAGLGGVA), serve as a signal peptide directing secretion. At 23–132 (EGPGLAFSED…PSHSEVWGYG (110 aa)) the chain is on the extracellular side. Residues Asn-40 and Asn-88 are each glycosylated (N-linked (GlcNAc...) asparagine). A helical transmembrane segment spans residues 133 to 153 (FLSVTIINLASLLGLILTPLI). Residues 154–160 (KKSYFPK) lie on the Cytoplasmic side of the membrane. The chain crosses the membrane as a helical span at residues 161–181 (ILTFFVGLAIGTLFSNAIFQL). The Extracellular portion of the chain corresponds to 182–191 (IPEAFGFDPK). A helical transmembrane segment spans residues 192 to 212 (VDSYVEKAVAVFGGFYLLFFF). At 213–365 (ERMLKMLLKT…LNAGMSTRQA (153 aa)) the chain is on the cytoplasmic side. Residues 343–348 (EEFPHE) carry the XEXPHE-motif motif. Residues 366–386 (LLFNFLSACSCYVGLAFGILV) traverse the membrane as a helical segment. Residues 387 to 388 (GN) are Extracellular-facing. Residues 389–409 (NFAPNIIFALAGGMFLYISLA) traverse the membrane as a helical segment. Residues 410–429 (DMFPEMNDMLREKVTGRKTD) are Cytoplasmic-facing. A helical membrane pass occupies residues 430–450 (FTFFMIQNAGMLTGFTAILLI). The Extracellular portion of the chain corresponds to 451 to 460 (TLYAGEIELE).

The protein belongs to the ZIP transporter (TC 2.A.5) family. As to quaternary structure, homodimer. In terms of processing, N-glycosylated. N-glycosylation is not required for proper iron and zinc transport. Ubiquitously expressed. Expressed in thymus, placenta, lung, liver, pancreas, salivary gland and, to a lower extent, in spleen, testis, ovary, small intestine, colon, leukocyte, heart. Highest expression is observed in pancreas. Expressed by macrophages (at protein level). Expressed by microvascular capillary endothelial cells that constitute the blood-brain barrier (at protein level).

Its subcellular location is the cell membrane. It localises to the lysosome membrane. The protein localises to the apical cell membrane. It is found in the basolateral cell membrane. The enzyme catalyses Zn(2+)(out) + 2 hydrogencarbonate(out) = Zn(2+)(in) + 2 hydrogencarbonate(in). The catalysed reaction is selenite(out) + Zn(2+)(out) + hydrogencarbonate(out) = selenite(in) + Zn(2+)(in) + hydrogencarbonate(in). It carries out the reaction Mn(2+)(out) + 2 hydrogencarbonate(out) = Mn(2+)(in) + 2 hydrogencarbonate(in). It catalyses the reaction Fe(2+)(out) + 2 hydrogencarbonate(out) = Fe(2+)(in) + 2 hydrogencarbonate(in). The enzyme catalyses Cd(2+)(out) + 2 hydrogencarbonate(out) = Cd(2+)(in) + 2 hydrogencarbonate(in). The catalysed reaction is Co(2+)(out) + 2 hydrogencarbonate(out) = Co(2+)(in) + 2 hydrogencarbonate(in). Its function is as follows. Electroneutral divalent metal cation:bicarbonate symporter of the plasma membrane mediating the cellular uptake of zinc and manganese, two divalent metal cations important for development, tissue homeostasis and immunity. Transports an electroneutral complex composed of a divalent metal cation and two bicarbonate anions or alternatively a bicarbonate and a selenite anion. Thereby, it also contributes to the cellular uptake of selenium, an essential trace metal and micronutrient. Also imports cadmium a non-essential metal which is cytotoxic and carcinogenic. May also transport iron and cobalt through membranes. Through zinc import, indirectly regulates the metal-dependent transcription factor MTF1 and the expression of some metalloproteases involved in cartilage catabolism and also probably heart development. Also indirectly regulates the expression of proteins involved in cell morphology and cytoskeleton organization. Indirectly controls innate immune function and inflammatory response by regulating zinc cellular uptake which in turn modulates the expression of genes specific of these processes. Protects, for instance, cells from injury and death at the onset of inflammation. By regulating zinc influx into monocytes also directly modulates their adhesion to endothelial cells and arteries. Reclaims manganese from the bile at the apical membrane of hepatocytes, thereby regulating the activity of the manganese-dependent enzymes through the systemic levels of the nutrient. Also participates in manganese reabsorption in the proximal tubule of the kidney. By mediating the extracellular uptake of manganese by cells of the blood-brain barrier, may also play a role in the transport of the micronutrient to the brain. With manganese cellular uptake also participates in mitochondrial proper function. Finally, also probably functions intracellularly, translocating zinc from lysosome to cytosol to indirectly enhance the expression of specific genes during TCR-mediated T cell activation. This is Metal cation symporter ZIP8 from Homo sapiens (Human).